Reading from the N-terminus, the 197-residue chain is Xanthine phosphoribosyltransferase (197 aa).

Xanthine is bound by residues leucine 20 and asparagine 27. 5-phospho-alpha-D-ribose 1-diphosphate is bound at residue 128–132 (ANGQA). Lysine 156 provides a ligand contact to xanthine.

Belongs to the purine/pyrimidine phosphoribosyltransferase family. Xpt subfamily. Homodimer.

Its subcellular location is the cytoplasm. It catalyses the reaction XMP + diphosphate = xanthine + 5-phospho-alpha-D-ribose 1-diphosphate. It functions in the pathway purine metabolism; XMP biosynthesis via salvage pathway; XMP from xanthine: step 1/1. In terms of biological role, converts the preformed base xanthine, a product of nucleic acid breakdown, to xanthosine 5'-monophosphate (XMP), so it can be reused for RNA or DNA synthesis. This is Xanthine phosphoribosyltransferase from Bacillus mycoides (strain KBAB4) (Bacillus weihenstephanensis).